A 264-amino-acid chain; its full sequence is NADH dehydrogenase [ubiquinone] iron-sulfur protein 3, mitochondrial (264 aa).

The N-terminal 36 residues, 1–36 (MAAAAVARLWWRGILGASALTRGTGRPSVLLLPVRR), are a transit peptide targeting the mitochondrion.

This sequence belongs to the complex I 30 kDa subunit family. As to quaternary structure, core subunit of respiratory chain NADH dehydrogenase (Complex I) which is composed of 45 different subunits. Interacts with NDUFAF3. Interacts with RAB5IF. Found in subcomplexes containing subunits NDUFS2, MT-ND1 and NDUFA13.

It localises to the mitochondrion inner membrane. The catalysed reaction is a ubiquinone + NADH + 5 H(+)(in) = a ubiquinol + NAD(+) + 4 H(+)(out). In terms of biological role, core subunit of the mitochondrial membrane respiratory chain NADH dehydrogenase (Complex I) which catalyzes electron transfer from NADH through the respiratory chain, using ubiquinone as an electron acceptor. Essential for the catalytic activity and assembly of complex I. The chain is NADH dehydrogenase [ubiquinone] iron-sulfur protein 3, mitochondrial (NDUFS3) from Homo sapiens (Human).